Reading from the N-terminus, the 329-residue chain is Biotin synthase (329 aa).

Residues 46-275 (YYGNKVKLNM…TKEIRISGGR (230 aa)) enclose the Radical SAM core domain. Positions 64, 68, and 71 each coordinate [4Fe-4S] cluster. [2Fe-2S] cluster contacts are provided by cysteine 108, cysteine 140, cysteine 200, and arginine 270.

It belongs to the radical SAM superfamily. Biotin synthase family. In terms of assembly, homodimer. It depends on [4Fe-4S] cluster as a cofactor. [2Fe-2S] cluster is required as a cofactor.

The catalysed reaction is (4R,5S)-dethiobiotin + (sulfur carrier)-SH + 2 reduced [2Fe-2S]-[ferredoxin] + 2 S-adenosyl-L-methionine = (sulfur carrier)-H + biotin + 2 5'-deoxyadenosine + 2 L-methionine + 2 oxidized [2Fe-2S]-[ferredoxin]. It functions in the pathway cofactor biosynthesis; biotin biosynthesis; biotin from 7,8-diaminononanoate: step 2/2. Its function is as follows. Catalyzes the conversion of dethiobiotin (DTB) to biotin by the insertion of a sulfur atom into dethiobiotin via a radical-based mechanism. The sequence is that of Biotin synthase from Anoxybacillus flavithermus (strain DSM 21510 / WK1).